The chain runs to 233 residues: Cytochrome c biogenesis ATP-binding export protein CcmA (233 aa).

Positions 17-233 constitute an ABC transporter domain; it reads FAGEDLLCVR…AAGLFLEDEG (217 aa). 49 to 56 contributes to the ATP binding site; that stretch reads GPNGSGKS.

Belongs to the ABC transporter superfamily. CcmA exporter (TC 3.A.1.107) family. In terms of assembly, the complex is composed of two ATP-binding proteins (CcmA) and two transmembrane proteins (CcmB).

It is found in the cell inner membrane. The catalysed reaction is heme b(in) + ATP + H2O = heme b(out) + ADP + phosphate + H(+). Functionally, part of the ABC transporter complex CcmAB involved in the biogenesis of c-type cytochromes; once thought to export heme, this seems not to be the case, but its exact role is uncertain. Responsible for energy coupling to the transport system. The chain is Cytochrome c biogenesis ATP-binding export protein CcmA from Rhodospirillum rubrum (strain ATCC 11170 / ATH 1.1.1 / DSM 467 / LMG 4362 / NCIMB 8255 / S1).